We begin with the raw amino-acid sequence, 185 residues long: Probable E3 ubiquitin-protein ligase ATL44 (185 aa).

Residues 29 to 49 (VVILSALLCALICVAGLAAVV) form a helical membrane-spanning segment. Residues 102-144 (CAICLTDFADGEEIRVLPLCGHSFHVECIDKWLVSRSSCPSCR) form an RING-type; atypical zinc finger. The tract at residues 163 to 185 (MKDQAHRHQHHQHSSTTIPTFLP) is disordered. The segment covering 176-185 (SSTTIPTFLP) has biased composition (polar residues).

This sequence belongs to the RING-type zinc finger family. ATL subfamily. Interacts with BIK1. In terms of processing, auto-monoubiquitination. As to expression, expressed in stems, flowers and green siliques.

The protein localises to the membrane. It carries out the reaction S-ubiquitinyl-[E2 ubiquitin-conjugating enzyme]-L-cysteine + [acceptor protein]-L-lysine = [E2 ubiquitin-conjugating enzyme]-L-cysteine + N(6)-ubiquitinyl-[acceptor protein]-L-lysine.. The protein operates within protein modification; protein ubiquitination. Functionally, E3 ubiquitin-protein ligase that possess E3 ubiquitin ligase activity in vitro and mediates protein monoubiquitination. Triggers the monoubiquitination of phosphorylated BIK1 in response to pathogen-associated molecular pattern (PAMP) detection. The polypeptide is Probable E3 ubiquitin-protein ligase ATL44 (Arabidopsis thaliana (Mouse-ear cress)).